We begin with the raw amino-acid sequence, 517 residues long: General transcription factor IIF subunit 1 (517 aa).

An N-acetylalanine modification is found at A2. A Phosphothreonine modification is found at T156. The disordered stretch occupies residues Q178 to K466. Phosphoserine occurs at positions 217, 218, 221, and 224. Basic residues predominate over residues P232–K251. Acidic residues-rich tracts occupy residues D255 to E270 and E303 to E325. Residue T331 is modified to Phosphothreonine. The span at E343–S355 shows a compositional bias: acidic residues. Positions A364 to R374 are enriched in basic residues. S377, S380, S381, and S385 each carry phosphoserine. Residues S377–S391 are compositionally biased toward low complexity. T389 is modified (phosphothreonine). S391 is modified (phosphoserine). Residue K407 is modified to N6-acetyllysine. The span at G428–V452 shows a compositional bias: polar residues. Residues S431, S433, and S436 each carry the phosphoserine modification. T437 and T446 each carry phosphothreonine. A Phosphoserine modification is found at S449. Residues E503, H512, and E517 each contribute to the Zn(2+) site.

This sequence belongs to the TFIIF alpha subunit family. As to quaternary structure, heterodimer of an alpha and a beta subunit. Interacts with GTF2F2, CTDP1, TAF6/TAFII80 and URI1. Interacts with GTF2B (via C-terminus and preferentially via acetylated form); this interaction prevents binding of GTF2B to GTF2F2. Part of TBP-based Pol II pre-initiation complex (PIC), in which Pol II core assembles with general transcription factors and other specific initiation factors including GTF2E1, GTF2E2, GTF2F1, GTF2F2, TCEA1, ERCC2, ERCC3, GTF2H2, GTF2H3, GTF2H4, GTF2H5, GTF2A1, GTF2A2, GTF2B and TBP; this large multi-subunit PIC complex mediates DNA unwinding and targets Pol II core to the transcription start site where the first phosphodiester bond forms. Post-translationally, phosphorylated on Ser and other residues by TAF1 and casein kinase II-like kinases.

It localises to the nucleus. Its function is as follows. TFIIF is a general transcription initiation factor that binds to RNA polymerase II and helps to recruit it to the initiation complex in collaboration with TFIIB. It promotes transcription elongation. This is General transcription factor IIF subunit 1 (GTF2F1) from Homo sapiens (Human).